Reading from the N-terminus, the 103-residue chain is uncharacterized protein (103 aa).

Transmembrane regions (helical) follow at residues 12–34, 49–66, and 79–101; these read GFSW…LTIS, TLMS…ALIA, and FARG…VAGG.

The protein localises to the cell membrane. This is an uncharacterized protein from Pasteurella multocida (strain Pm70).